The chain runs to 1075 residues: DNA-directed RNA polymerase subunit beta (1075 aa).

It belongs to the RNA polymerase beta chain family. In terms of assembly, in plastids the minimal PEP RNA polymerase catalytic core is composed of four subunits: alpha, beta, beta', and beta''. When a (nuclear-encoded) sigma factor is associated with the core the holoenzyme is formed, which can initiate transcription.

It localises to the plastid. The protein localises to the chloroplast. It catalyses the reaction RNA(n) + a ribonucleoside 5'-triphosphate = RNA(n+1) + diphosphate. DNA-dependent RNA polymerase catalyzes the transcription of DNA into RNA using the four ribonucleoside triphosphates as substrates. This Zea mays (Maize) protein is DNA-directed RNA polymerase subunit beta.